Consider the following 421-residue polypeptide: UV-B-induced protein At3g17800, chloroplastic (421 aa).

Disordered stretches follow at residues 1-40 (MDAL…RSGS) and 74-95 (VRAS…IAPL). Residues 1 to 75 (MDALTSSLVR…AKTRRSFVVR (75 aa)) constitute a chloroplast transit peptide. The segment covering 16-28 (SRTSDNGSGSMFL) has biased composition (polar residues). Positions 74 to 88 (VRASSASNDASSGSS) are enriched in low complexity.

Its subcellular location is the plastid. It is found in the chloroplast. The protein is UV-B-induced protein At3g17800, chloroplastic of Arabidopsis thaliana (Mouse-ear cress).